We begin with the raw amino-acid sequence, 306 residues long: MNPLKKKPRSKNLNPTVPLPDWMKVRVSFPTDSDALSVVRAEVESKELHTVCESASCPNLNHCWNRKTATYMLAGDICTRRCQYCDVAFGKPKPLDSLEPERVARSVQSLGLRHVVLTAVNRDDLKDGGASHFAETITKIKTYHKDCTIEVLIPDFKAKEDSLQILYAAKPNIINHNIETVESLFPTITPQKNYKRSLEVLAHIANHGFLTKSGIILGLGETDEDVNQCLMDLFAHGVRMLTIGQYLQPGPTHYPVQSFVRPETFVMWKETAYKIGFKTVASGPLVRSSYHADEYFHEESQILPTE.

Residues Cys-52, Cys-57, Cys-63, Cys-78, Cys-82, Cys-85, and Ser-289 each contribute to the [4Fe-4S] cluster site. The Radical SAM core domain maps to 64 to 278; sequence WNRKTATYML…KETAYKIGFK (215 aa).

It belongs to the radical SAM superfamily. Lipoyl synthase family. [4Fe-4S] cluster is required as a cofactor.

The protein localises to the cytoplasm. It carries out the reaction [[Fe-S] cluster scaffold protein carrying a second [4Fe-4S](2+) cluster] + N(6)-octanoyl-L-lysyl-[protein] + 2 oxidized [2Fe-2S]-[ferredoxin] + 2 S-adenosyl-L-methionine + 4 H(+) = [[Fe-S] cluster scaffold protein] + N(6)-[(R)-dihydrolipoyl]-L-lysyl-[protein] + 4 Fe(3+) + 2 hydrogen sulfide + 2 5'-deoxyadenosine + 2 L-methionine + 2 reduced [2Fe-2S]-[ferredoxin]. The protein operates within protein modification; protein lipoylation via endogenous pathway; protein N(6)-(lipoyl)lysine from octanoyl-[acyl-carrier-protein]: step 2/2. Catalyzes the radical-mediated insertion of two sulfur atoms into the C-6 and C-8 positions of the octanoyl moiety bound to the lipoyl domains of lipoate-dependent enzymes, thereby converting the octanoylated domains into lipoylated derivatives. This is Lipoyl synthase from Leptospira biflexa serovar Patoc (strain Patoc 1 / Ames).